The following is a 538-amino-acid chain: Probable bifunctional tRNA threonylcarbamoyladenosine biosynthesis protein (538 aa).

Residues 1 to 327 (MIVLICLGIE…FRTDEVEAPW (327 aa)) are kae1. H111, H115, and Y132 together coordinate Fe cation. L-threonylcarbamoyladenylate is bound by residues 132–136 (YVSGG), D164, G177, E181, and N260. Position 288 (D288) interacts with Fe cation. One can recognise a Protein kinase domain in the interval 336 to 538 (KLPDNLIAKG…EIESRGRYTH (203 aa)). Residues 342–350 (IAKGAESDI) and K363 each bind ATP. D452 functions as the Proton acceptor; for kinase activity in the catalytic mechanism.

This sequence in the N-terminal section; belongs to the KAE1 / TsaD family. In the C-terminal section; belongs to the protein kinase superfamily. Tyr protein kinase family. BUD32 subfamily. Component of the KEOPS complex that consists of Kae1, Bud32, Cgi121 and Pcc1; the whole complex dimerizes. Fe(2+) serves as cofactor.

The protein resides in the cytoplasm. The enzyme catalyses L-seryl-[protein] + ATP = O-phospho-L-seryl-[protein] + ADP + H(+). The catalysed reaction is L-threonyl-[protein] + ATP = O-phospho-L-threonyl-[protein] + ADP + H(+). It catalyses the reaction L-threonylcarbamoyladenylate + adenosine(37) in tRNA = N(6)-L-threonylcarbamoyladenosine(37) in tRNA + AMP + H(+). Functionally, required for the formation of a threonylcarbamoyl group on adenosine at position 37 (t(6)A37) in tRNAs that read codons beginning with adenine. Is a component of the KEOPS complex that is probably involved in the transfer of the threonylcarbamoyl moiety of threonylcarbamoyl-AMP (TC-AMP) to the N6 group of A37. The Kae1 domain likely plays a direct catalytic role in this reaction. The Bud32 domain probably displays kinase activity that regulates Kae1 function. This chain is Probable bifunctional tRNA threonylcarbamoyladenosine biosynthesis protein, found in Methanobrevibacter smithii (strain ATCC 35061 / DSM 861 / OCM 144 / PS).